A 52-amino-acid polypeptide reads, in one-letter code: MKLTHVLIVAVLVLTVCHLTMAVCKSGGQACWFLLKKHNCCSGYCIVAVCAG.

An N-terminal signal peptide occupies residues 1-22; it reads MKLTHVLIVAVLVLTVCHLTMA. Cystine bridges form between cysteine 24-cysteine 41, cysteine 31-cysteine 45, and cysteine 40-cysteine 50.

In terms of tissue distribution, expressed by the venom duct.

Its subcellular location is the secreted. In terms of biological role, probable neurotoxin. The polypeptide is Conotoxin Cal6.25 (Californiconus californicus (California cone)).